Consider the following 200-residue polypeptide: Large ribosomal subunit protein uL4 (200 aa).

Positions G38 to R68 are disordered. A compositionally biased stretch (basic residues) spans G54–G65.

Belongs to the universal ribosomal protein uL4 family. In terms of assembly, part of the 50S ribosomal subunit.

Functionally, one of the primary rRNA binding proteins, this protein initially binds near the 5'-end of the 23S rRNA. It is important during the early stages of 50S assembly. It makes multiple contacts with different domains of the 23S rRNA in the assembled 50S subunit and ribosome. Its function is as follows. Forms part of the polypeptide exit tunnel. This Pseudomonas fluorescens (strain SBW25) protein is Large ribosomal subunit protein uL4.